Consider the following 416-residue polypeptide: Thyroid hormone receptor alpha-A (416 aa).

A compositionally biased stretch (polar residues) spans 1-13 (MEPMSNKQDSNSS). A disordered region spans residues 1–37 (MEPMSNKQDSNSSEGDEKGWPDVPKRKRKNSQCSMKS). The modulating stretch occupies residues 1–58 (MEPMSNKQDSNSSEGDEKGWPDVPKRKRKNSQCSMKSMSALSVSVPGYIPSYLEKDEP). The segment covering 15–24 (GDEKGWPDVP) has biased composition (basic and acidic residues). NR C4-type zinc fingers lie at residues 59–79 (CVVCGDKATGYHYRCITCEGC) and 97–121 (CKYEGCCIIDKITRNQCQLCRFKKC). A DNA-binding region (nuclear receptor) is located at residues 59-126 (CVVCGDKATG…RFKKCISVGM (68 aa)). One can recognise an NR LBD domain in the interval 169-413 (AEWELIRMAT…PPLFLEVFED (245 aa)).

It belongs to the nuclear hormone receptor family. NR1 subfamily.

It localises to the nucleus. High affinity receptor for triiodothyronine. The sequence is that of Thyroid hormone receptor alpha-A (thra1) from Paralichthys olivaceus (Bastard halibut).